A 159-amino-acid polypeptide reads, in one-letter code: Protein Smg homolog (159 aa).

It belongs to the Smg family.

In Vibrio vulnificus (strain CMCP6), this protein is Protein Smg homolog.